Here is a 319-residue protein sequence, read N- to C-terminus: MASPAAGDVLIVGSGLVGRSWAMLFASGGFRVKLYDIEPRQITGALENIRKEMKSLQQSGSLKGSLSAEEQLSLISSCTNLAEAVEGVVHIQECVPENLDLKRKIFAQLDSIVDDRVVLSSSSSCLLPSKLFTGLAHVKQCIVAHPVNPPYYIPLVELVPHPETSPATVDRTHALMRKIGQSPVRVLKEIDGFVLNRLQYAIISEAWRLVEEGIVSPSDLDLVMSDGLGMRYAFIGPLETMHLNAEGMLSYCDRYSEGMKRVLKSFGSIPEFSGATVEKVNQAMCKKVPADPEHLAARREWRDECLKRLAKLKRQMQPQ.

Alanine 2 carries the N-acetylalanine modification. At serine 3 the chain carries Phosphoserine. NAD(+) contacts are provided by residues 16 to 17 (LV), aspartate 36, glutamate 97, and lysine 102. At serine 111 the chain carries Phosphoserine.

This sequence belongs to the 3-hydroxyacyl-CoA dehydrogenase family. Homodimer. As to expression, detected in eye lens, kidney, liver, heart, lung, brain and testis.

The protein resides in the cytoplasm. It carries out the reaction L-gulonate + NAD(+) = 3-dehydro-L-gulonate + NADH + H(+). Its activity is regulated as follows. Inhibited by malonate and by inorganic phosphate. Its function is as follows. Functions as a crystallin in the rabbit eye lens. Has high L-gulonate 3-dehydrogenase activity. It also exhibits low dehydrogenase activity toward L-3-hydroxybutyrate (HBA) and L-threonate. The sequence is that of Lambda-crystallin (CRYL1) from Oryctolagus cuniculus (Rabbit).